The sequence spans 1010 residues: PHD finger protein 20 (1010 aa).

Tudor domains are found at residues His4–Glu69 and Gly83–Arg147. 2 disordered regions span residues Ile142–Leu373 and Glu483–Lys609. Over residues Arg147–Val246 the composition is skewed to basic and acidic residues. Ser159 carries the post-translational modification Phosphoserine. A DNA-binding region (a.T hook) is located at residues Lys257 to Thr269. Polar residues predominate over residues Thr267–Pro280. Basic and acidic residues-rich tracts occupy residues Lys292–Arg325, Glu483–Gly493, and Ala525–Arg541. The C2H2-type zinc finger occupies Phe455–Ser485. A compositionally biased stretch (basic residues) spans Val542–Thr554. The segment at Arg657–Pro703 adopts a PHD-type zinc-finger fold. The tract at residues Arg804–Ser827 is disordered. An N6-acetyllysine modification is found at Lys841. Ser876 and Ser878 each carry phosphoserine. Residues Leu877–Lys902 form a disordered region. Residues Asp886–Lys902 show a composition bias toward basic and acidic residues.

In terms of assembly, homodimer; disulfide-linked. Component of some MLL1/MLL complex, at least composed of the core components KMT2A/MLL1, ASH2L, HCFC1, WDR5 and RBBP5, as well as the facultative components BACC1, CHD8, E2F6, HSP70, INO80C, KANSL1, LAS1L, MAX, MCRS1, MGA, MYST1/MOF, PELP1, PHF20, PRP31, RING2, RUVB1/TIP49A, RUVB2/TIP49B, SENP3, TAF1, TAF4, TAF6, TAF7, TAF9 and TEX10. Component of the NSL complex at least composed of MOF/KAT8, KANSL1, KANSL2, KANSL3, MCRS1, PHF20, OGT1/OGT, WDR5 and HCFC1. Ubiquitinated by TRIM26; leading to proteasomal degradation.

Its subcellular location is the nucleus. Functionally, contributes to methyllysine-dependent p53/TP53 stabilization and up-regulation after DNA damage. Methyllysine-binding protein, component of the MOF histone acetyltransferase protein complex. Not required for maintaining the global histone H4 'Lys-16' acetylation (H4K16ac) levels or locus specific histone acetylation, but instead works downstream in transcriptional regulation of MOF target genes. As part of the NSL complex it may be involved in acetylation of nucleosomal histone H4 on several lysine residues. The chain is PHD finger protein 20 (Phf20) from Mus musculus (Mouse).